The sequence spans 313 residues: Protein ABA AND ROS SENSITIVE 1 (313 aa).

The Nuclear localization signal 1 motif lies at 5 to 12 (AKKKAMFR). The C2H2-type zinc finger occupies 39–61 (CRVCNVVLKSESLWDVHQASRKH). Basic and acidic residues predominate over residues 115 to 131 (ARAEVEPAKSKNLEQSK). Disordered stretches follow at residues 115–189 (ARAE…LPTG), 232–254 (MEEE…QRSY), and 271–313 (ARLA…AQHL). Positions 155 to 176 (TDSSNTKTTSEPKQSQTQTTGP) are enriched in polar residues. Positions 232–248 (MEEEEVDAAETIEEEEQ) are enriched in acidic residues. Residues 232-271 (MEEEEVDAAETIEEEEQREQRSYKEKVEILKRKKMELKAA) are a coiled coil. The Nuclear localization signal 2 signature appears at 274–281 (AKRSKTSE). The segment covering 293–305 (ESPSDEEDDEDSA) has biased composition (acidic residues).

In terms of tissue distribution, mostly expressed in siliques and, to a lower extent, in roots. Barely deteclable in leaves and stems.

It is found in the nucleus. Its subcellular location is the cytoplasm. In terms of biological role, essential for breaking seed dormancy before seed germination. Prevents reactive oxygen species (ROS) accumulation in response to abscisic acid (ABA) and oxidative stress, probably by repressing the accumulation of ABA-induced ROS-scavenging enzymes (e.g. CSD3). This is Protein ABA AND ROS SENSITIVE 1 from Arabidopsis thaliana (Mouse-ear cress).